We begin with the raw amino-acid sequence, 282 residues long: MSEYISLEQYNTYRIKSFAKYVYFPTNNQELLDIVNNHNKLFFLGNGSNVIFSKEYYDDVAFVIFTKKFNSFNIIDNYASVQAGVLLQDLAFATYNASLSGIETFYDVPASVGGALIMNAGAYGDEIYTCVKSVTILDLNTKQIKKYLKKDIEYGYRYSIFKYMKDICILSAEFEFEYKSKQEIKAKLDDIYSRRLSNLPQKPTAGSVFKRPQANMPVGIMVEQLGLKGKQIGDAQISPKHGGIIVNNGNATGQNILDLIEFIKQQILEHYNIELHEEQIVI.

Positions 15–179 constitute an FAD-binding PCMH-type domain; sequence IKSFAKYVYF…LSAEFEFEYK (165 aa). The active site involves Arg157. Ser207 (proton donor) is an active-site residue. Glu278 is a catalytic residue.

This sequence belongs to the MurB family. Requires FAD as cofactor.

It is found in the cytoplasm. It catalyses the reaction UDP-N-acetyl-alpha-D-muramate + NADP(+) = UDP-N-acetyl-3-O-(1-carboxyvinyl)-alpha-D-glucosamine + NADPH + H(+). Its pathway is cell wall biogenesis; peptidoglycan biosynthesis. Cell wall formation. In Francisella tularensis subsp. tularensis (strain SCHU S4 / Schu 4), this protein is UDP-N-acetylenolpyruvoylglucosamine reductase.